The chain runs to 201 residues: Holliday junction resolvase RecU (201 aa).

4 residues coordinate Mg(2+): Thr87, Asp89, Asp102, and Gln121.

This sequence belongs to the RecU family. It depends on Mg(2+) as a cofactor.

Its subcellular location is the cytoplasm. It carries out the reaction Endonucleolytic cleavage at a junction such as a reciprocal single-stranded crossover between two homologous DNA duplexes (Holliday junction).. In terms of biological role, endonuclease that resolves Holliday junction intermediates in genetic recombination. Cleaves mobile four-strand junctions by introducing symmetrical nicks in paired strands. Promotes annealing of linear ssDNA with homologous dsDNA. Required for DNA repair, homologous recombination and chromosome segregation. This is Holliday junction resolvase RecU from Levilactobacillus brevis (strain ATCC 367 / BCRC 12310 / CIP 105137 / JCM 1170 / LMG 11437 / NCIMB 947 / NCTC 947) (Lactobacillus brevis).